The primary structure comprises 204 residues: Prephenate decarboxylase (204 aa).

This sequence belongs to the prephenate decarboxylase family.

The protein resides in the cytoplasm. The enzyme catalyses prephenate + H(+) = 3-[(4R)-4-hydroxycyclohexa-1,5-dien-1-yl]-2-oxopropanoate + CO2. The protein operates within antibiotic biosynthesis; bacilysin biosynthesis. Functionally, part of the bacABCDEF operon responsible for the biosynthesis of the nonribosomally synthesized dipeptide antibiotic bacilysin, composed of L-alanine and L-anticapsin. Bacilysin is an irreversible inactivator of the glutaminase domain of glucosamine synthetase. BacA is an unusual prephenate decarboxylase that avoids the typical aromatization of the cyclohexadienol ring of prephenate. BacA catalyzes the protonation of prephenate (1-carboxy-4-hydroxy-alpha-oxo-2,5-cyclohexadiene-1-propanoic acid) at C6 position, followed by a decarboxylation to produce the endocyclic-delta(4),delta(8)-7R-dihydro-hydroxyphenylpyruvate (en-H2HPP). En-H2HPP is able to undergo a slow nonenzymatic isomerization to produce the exocyclic-delta(3),delta(5)-dihydro-hydroxyphenylpyruvate (ex-H2HPP). BacA isomerizes only the pro-R double bond in prephenate. The polypeptide is Prephenate decarboxylase (Bacillus amyloliquefaciens (Bacillus velezensis)).